A 1606-amino-acid polypeptide reads, in one-letter code: Pentafunctional AROM polypeptide (1606 aa).

The tract at residues 1–390 (MANADVLKVS…YEPKATVVPD (390 aa)) is 3-dehydroquinate synthase. Residues 45–47 (DTN), 85–88 (ETSK), 116–118 (GGV), and D121 contribute to the NAD(+) site. R132 provides a ligand contact to 7-phospho-2-dehydro-3-deoxy-D-arabino-heptonate. Residue 141–142 (TT) coordinates NAD(+). 7-phospho-2-dehydro-3-deoxy-D-arabino-heptonate contacts are provided by D148 and K154. Position 163 (K163) interacts with NAD(+). A 7-phospho-2-dehydro-3-deoxy-D-arabino-heptonate-binding site is contributed by N164. NAD(+) is bound by residues 181 to 184 (FLET) and N192. Residue E196 coordinates Zn(2+). Residues 196–199 (EVVK) and K256 each bind 7-phospho-2-dehydro-3-deoxy-D-arabino-heptonate. The active-site Proton acceptor; for 3-dehydroquinate synthase activity is E266. 7-phospho-2-dehydro-3-deoxy-D-arabino-heptonate contacts are provided by residues 270-274 (RNLVN) and H277. Residue H277 coordinates Zn(2+). H281 serves as the catalytic Proton acceptor; for 3-dehydroquinate synthase activity. 7-phospho-2-dehydro-3-deoxy-D-arabino-heptonate is bound by residues H293 and K362. A Zn(2+)-binding site is contributed by H293. The interval 403 to 850 (VIPGVPRHHP…WDDLENKIGL (448 aa)) is EPSP synthase. The For EPSP synthase activity role is filled by C832. The shikimate kinase stretch occupies residues 875-1070 (AASIILIGMR…TSGRRSYFLC (196 aa)). 882-889 (GMRGTGKT) serves as a coordination point for ATP. The segment at 1071–1296 (LTYPDVTQSF…AAPGQLSFKQ (226 aa)) is 3-dehydroquinase. The Proton acceptor; for 3-dehydroquinate dehydratase activity role is filled by H1198. K1226 (schiff-base intermediate with substrate; for 3-dehydroquinate dehydratase activity) is an active-site residue. The interval 1309-1606 (AQRFYLFGTP…QFVFEEECES (298 aa)) is shikimate dehydrogenase.

The protein in the N-terminal section; belongs to the sugar phosphate cyclases superfamily. Dehydroquinate synthase family. This sequence in the 2nd section; belongs to the EPSP synthase family. It in the 3rd section; belongs to the shikimate kinase family. In the 4th section; belongs to the type-I 3-dehydroquinase family. The protein in the C-terminal section; belongs to the shikimate dehydrogenase family. As to quaternary structure, homodimer. Requires Zn(2+) as cofactor.

The protein resides in the cytoplasm. The enzyme catalyses 7-phospho-2-dehydro-3-deoxy-D-arabino-heptonate = 3-dehydroquinate + phosphate. The catalysed reaction is 3-dehydroquinate = 3-dehydroshikimate + H2O. It catalyses the reaction shikimate + NADP(+) = 3-dehydroshikimate + NADPH + H(+). It carries out the reaction shikimate + ATP = 3-phosphoshikimate + ADP + H(+). The enzyme catalyses 3-phosphoshikimate + phosphoenolpyruvate = 5-O-(1-carboxyvinyl)-3-phosphoshikimate + phosphate. Its pathway is metabolic intermediate biosynthesis; chorismate biosynthesis; chorismate from D-erythrose 4-phosphate and phosphoenolpyruvate: step 2/7. It functions in the pathway metabolic intermediate biosynthesis; chorismate biosynthesis; chorismate from D-erythrose 4-phosphate and phosphoenolpyruvate: step 3/7. The protein operates within metabolic intermediate biosynthesis; chorismate biosynthesis; chorismate from D-erythrose 4-phosphate and phosphoenolpyruvate: step 4/7. It participates in metabolic intermediate biosynthesis; chorismate biosynthesis; chorismate from D-erythrose 4-phosphate and phosphoenolpyruvate: step 5/7. Its pathway is metabolic intermediate biosynthesis; chorismate biosynthesis; chorismate from D-erythrose 4-phosphate and phosphoenolpyruvate: step 6/7. Its function is as follows. The AROM polypeptide catalyzes 5 consecutive enzymatic reactions in prechorismate polyaromatic amino acid biosynthesis. The protein is Pentafunctional AROM polypeptide of Laccaria bicolor (strain S238N-H82 / ATCC MYA-4686) (Bicoloured deceiver).